A 137-amino-acid chain; its full sequence is uncharacterized protein (137 aa).

Transmembrane regions (helical) follow at residues 26–42 (CSLC…FFAM) and 52–69 (ASIP…GSIL).

The protein resides in the membrane. This is an uncharacterized protein from Saccharomyces cerevisiae (strain ATCC 204508 / S288c) (Baker's yeast).